The primary structure comprises 290 residues: Release factor glutamine methyltransferase (290 aa).

2 residues coordinate S-adenosyl-L-methionine: aspartate 140 and asparagine 181. Position 181-184 (181-184 (NPPY)) interacts with substrate.

The protein belongs to the protein N5-glutamine methyltransferase family. PrmC subfamily.

It carries out the reaction L-glutaminyl-[peptide chain release factor] + S-adenosyl-L-methionine = N(5)-methyl-L-glutaminyl-[peptide chain release factor] + S-adenosyl-L-homocysteine + H(+). Methylates the class 1 translation termination release factors RF1/PrfA and RF2/PrfB on the glutamine residue of the universally conserved GGQ motif. The chain is Release factor glutamine methyltransferase from Chlamydia trachomatis serovar D (strain ATCC VR-885 / DSM 19411 / UW-3/Cx).